A 556-amino-acid polypeptide reads, in one-letter code: Probable Xaa-Pro aminopeptidase SS1G_06948 (556 aa).

Mn(2+) contacts are provided by Asp305, Asp316, Glu460, and Glu501.

The protein belongs to the peptidase M24B family. Requires Mn(2+) as cofactor.

It carries out the reaction Release of any N-terminal amino acid, including proline, that is linked to proline, even from a dipeptide or tripeptide.. Catalyzes the removal of a penultimate prolyl residue from the N-termini of peptides. In Sclerotinia sclerotiorum (strain ATCC 18683 / 1980 / Ss-1) (White mold), this protein is Probable Xaa-Pro aminopeptidase SS1G_06948.